Here is a 486-residue protein sequence, read N- to C-terminus: Outer dynein arm-docking complex subunit 4 (486 aa).

TPR repeat units follow at residues 14–47 (FTTY…QPDD), 49–81 (NCLV…NKNY), and 82–115 (FKGL…RPEL). The interval 153 to 180 (GVHPQNLNPSNKKESKKHSKKTDKGEKT) is disordered. 4 TPR repeats span residues 314 to 347 (GNLH…AKKC), 354 to 387 (SRAL…ACGG), 391 to 424 (AWLF…ADDI), and 431 to 464 (LNAS…AKLL).

Component of the outer dynein arm-docking complex along with ODAD1, ODAD2 and ODAD3.

The protein localises to the cytoplasm. It localises to the cytoskeleton. The protein resides in the cilium axoneme. In terms of biological role, component of the outer dynein arm-docking complex (ODA-DC) that mediates outer dynein arms (ODA) binding onto the doublet microtubule. Plays an essential role for the assembly of ODA-DC and in the docking of ODA in ciliary axoneme. This Danio rerio (Zebrafish) protein is Outer dynein arm-docking complex subunit 4 (odad4).